The chain runs to 1480 residues: UDP-N-acetylglucosamine--peptide N-acetylglucosaminyltransferase (1480 aa).

TPR repeat units follow at residues 38–71 (IFLYAIQGEISFKQKDWIQAFAAYEKAVAESKQK), 113–146 (VQVLAQLALLYLMCERYSEAEKLLSSIVESSTSN), 176–209 (ATILNNLAICNSKLGNHTLAFDQFQQALDIIKDP), and 288–321 (STICYNIGKLELTLGNLDRSVNHFKKSIEYQPSF). Positions 468-485 (PQEKESPKSDKIASEKPL) are enriched in basic and acidic residues. Positions 468 to 497 (PQEKESPKSDKIASEKPLVESNPGRSRTPS) are disordered. 2 TPR repeats span residues 613–646 (YEPFYNLGNILKADEENKKALQYYSRAIELNPRF) and 648–680 (DGYLARGVLYAELHRFETAYLDFSKCIELDPDN). The interval 1093–1128 (LSLDGSDATSSSVDSGIGSRTHSEAPIGGGDKDEGA) is disordered. Positions 1099–1112 (DATSSSVDSGIGSR) are enriched in polar residues. UDP-binding positions include Q1269, K1272, 1333–1336 (HIRR), 1351–1353 (GST), and D1357.

The protein belongs to the glycosyltransferase 41 family. O-GlcNAc transferase subfamily.

It localises to the cytoplasm. The protein localises to the nucleus. It catalyses the reaction L-seryl-[protein] + UDP-N-acetyl-alpha-D-glucosamine = 3-O-(N-acetyl-beta-D-glucosaminyl)-L-seryl-[protein] + UDP + H(+). It carries out the reaction L-threonyl-[protein] + UDP-N-acetyl-alpha-D-glucosamine = 3-O-(N-acetyl-beta-D-glucosaminyl)-L-threonyl-[protein] + UDP + H(+). Its pathway is protein modification; protein glycosylation. Its function is as follows. Catalyzes the transfer of a single N-acetylglucosamine from UDP-GlcNAc to a serine or threonine residue in cytoplasmic and nuclear proteins resulting in their modification with a beta-linked N-acetylglucosamine (O-GlcNAc). In Giardia intestinalis (strain ATCC 50803 / WB clone C6) (Giardia lamblia), this protein is UDP-N-acetylglucosamine--peptide N-acetylglucosaminyltransferase.